A 611-amino-acid polypeptide reads, in one-letter code: tRNA uridine 5-carboxymethylaminomethyl modification enzyme MnmG (611 aa).

14-19 (GAGHAG) contributes to the FAD binding site. Residue 274 to 288 (GPRYCPSIEDKIVKF) participates in NAD(+) binding.

This sequence belongs to the MnmG family. Homodimer. Heterotetramer of two MnmE and two MnmG subunits. The cofactor is FAD.

Its subcellular location is the cytoplasm. Functionally, NAD-binding protein involved in the addition of a carboxymethylaminomethyl (cmnm) group at the wobble position (U34) of certain tRNAs, forming tRNA-cmnm(5)s(2)U34. In Chlamydia felis (strain Fe/C-56) (Chlamydophila felis), this protein is tRNA uridine 5-carboxymethylaminomethyl modification enzyme MnmG.